Reading from the N-terminus, the 215-residue chain is Ribosome maturation factor RimP (215 aa).

The disordered stretch occupies residues 180-215 (KDNRARKEAKKRRGEPDDDVPEGAEADATEEHEQES). Residues 195 to 207 (PDDDVPEGAEADA) are compositionally biased toward acidic residues.

Belongs to the RimP family.

It localises to the cytoplasm. Functionally, required for maturation of 30S ribosomal subunits. The protein is Ribosome maturation factor RimP of Mesorhizobium japonicum (strain LMG 29417 / CECT 9101 / MAFF 303099) (Mesorhizobium loti (strain MAFF 303099)).